Consider the following 210-residue polypeptide: Ribosomal RNA small subunit methyltransferase G (210 aa).

S-adenosyl-L-methionine contacts are provided by residues glycine 77, phenylalanine 82, 100–102, 128–129, and arginine 141; these read ERS and VE.

This sequence belongs to the methyltransferase superfamily. RNA methyltransferase RsmG family.

It is found in the cytoplasm. Specifically methylates the N7 position of a guanine in 16S rRNA. The protein is Ribosomal RNA small subunit methyltransferase G of Borrelia recurrentis (strain A1).